A 284-amino-acid polypeptide reads, in one-letter code: MDYIIEDGFHFDIKNGKSPSYLINKYRTGHVIGNVYLLNKYEAFYLYLKNKISIDDEFFNGNIKFYMAYENLIGSGLYVKILNDCFMCRKSRNSRYKKVRFMPDDILLSFKDLYSDDSNIYITVDEEYESVYYSMERIDIKGSRKDDFSAASIDVSSGAYFGMNCPEWFGIDFHGKRLLNDYEIRFLNNDVKSNVDVIYKDLIKRGFIVKSGFKYGSNFRIYKNSMNEHSDYLVNYMDHDLWYVIARAVRLASNVRKRLIISGIIDNDPVYIKIERIKDIKTIL.

Active-site residues include Tyr-222, His-229, and Lys-257.

This sequence belongs to the tRNA-intron endonuclease family. Archaeal long subfamily. In terms of assembly, homodimer.

The catalysed reaction is pretRNA = a 3'-half-tRNA molecule with a 5'-OH end + a 5'-half-tRNA molecule with a 2',3'-cyclic phosphate end + an intron with a 2',3'-cyclic phosphate and a 5'-hydroxyl terminus.. Its function is as follows. Endonuclease that removes tRNA introns. Cleaves pre-tRNA at the 5'- and 3'-splice sites to release the intron. The products are an intron and two tRNA half-molecules bearing 2',3' cyclic phosphate and 5'-OH termini. Recognizes a pseudosymmetric substrate in which 2 bulged loops of 3 bases are separated by a stem of 4 bp. The sequence is that of tRNA-splicing endonuclease from Picrophilus torridus (strain ATCC 700027 / DSM 9790 / JCM 10055 / NBRC 100828 / KAW 2/3).